Consider the following 141-residue polypeptide: Galactose-6-phosphate isomerase subunit LacA (141 aa).

Belongs to the LacAB/RpiB family. Heteromultimeric protein consisting of LacA and LacB.

It carries out the reaction aldehydo-D-galactose 6-phosphate = keto-D-tagatose 6-phosphate. It participates in carbohydrate metabolism; D-galactose 6-phosphate degradation; D-tagatose 6-phosphate from D-galactose 6-phosphate: step 1/1. In Streptococcus agalactiae serotype Ia (strain ATCC 27591 / A909 / CDC SS700), this protein is Galactose-6-phosphate isomerase subunit LacA.